Here is a 262-residue protein sequence, read N- to C-terminus: Acyl-[acyl-carrier-protein]--UDP-N-acetylglucosamine O-acyltransferase (262 aa).

Belongs to the transferase hexapeptide repeat family. LpxA subfamily. Homotrimer.

Its subcellular location is the cytoplasm. The enzyme catalyses a (3R)-hydroxyacyl-[ACP] + UDP-N-acetyl-alpha-D-glucosamine = a UDP-3-O-[(3R)-3-hydroxyacyl]-N-acetyl-alpha-D-glucosamine + holo-[ACP]. It participates in glycolipid biosynthesis; lipid IV(A) biosynthesis; lipid IV(A) from (3R)-3-hydroxytetradecanoyl-[acyl-carrier-protein] and UDP-N-acetyl-alpha-D-glucosamine: step 1/6. Functionally, involved in the biosynthesis of lipid A, a phosphorylated glycolipid that anchors the lipopolysaccharide to the outer membrane of the cell. The protein is Acyl-[acyl-carrier-protein]--UDP-N-acetylglucosamine O-acyltransferase of Haemophilus influenzae (strain PittEE).